The chain runs to 277 residues: Large ribosomal subunit protein uL2 (277 aa).

The disordered stretch occupies residues Gly-222–Lys-277.

This sequence belongs to the universal ribosomal protein uL2 family. As to quaternary structure, part of the 50S ribosomal subunit. Forms a bridge to the 30S subunit in the 70S ribosome.

One of the primary rRNA binding proteins. Required for association of the 30S and 50S subunits to form the 70S ribosome, for tRNA binding and peptide bond formation. It has been suggested to have peptidyltransferase activity; this is somewhat controversial. Makes several contacts with the 16S rRNA in the 70S ribosome. The chain is Large ribosomal subunit protein uL2 from Streptococcus agalactiae serotype Ia (strain ATCC 27591 / A909 / CDC SS700).